A 67-amino-acid polypeptide reads, in one-letter code: Beta-defensin 123 (67 aa).

The first 20 residues, 1–20 (MKLLLLTLTVLLLLSQLTPG), serve as a signal peptide directing secretion. Cystine bridges form between C25/C52, C32/C46, and C36/C53.

It belongs to the beta-defensin family.

Its subcellular location is the secreted. Has antibacterial activity. In Pongo pygmaeus (Bornean orangutan), this protein is Beta-defensin 123 (DEFB123).